The sequence spans 404 residues: Cysteine desulfurase IscS (404 aa).

Residues 75–76, asparagine 155, glutamine 183, and 203–205 contribute to the pyridoxal 5'-phosphate site; these read AT and SAH. Lysine 206 carries the N6-(pyridoxal phosphate)lysine modification. Residue threonine 243 coordinates pyridoxal 5'-phosphate. Catalysis depends on cysteine 328, which acts as the Cysteine persulfide intermediate. Cysteine 328 is a [2Fe-2S] cluster binding site.

Belongs to the class-V pyridoxal-phosphate-dependent aminotransferase family. NifS/IscS subfamily. In terms of assembly, homodimer. Forms a heterotetramer with IscU, interacts with other sulfur acceptors. The cofactor is pyridoxal 5'-phosphate.

The protein resides in the cytoplasm. It catalyses the reaction (sulfur carrier)-H + L-cysteine = (sulfur carrier)-SH + L-alanine. The protein operates within cofactor biosynthesis; iron-sulfur cluster biosynthesis. In terms of biological role, master enzyme that delivers sulfur to a number of partners involved in Fe-S cluster assembly, tRNA modification or cofactor biosynthesis. Catalyzes the removal of elemental sulfur atoms from cysteine to produce alanine. Functions as a sulfur delivery protein for Fe-S cluster synthesis onto IscU, an Fe-S scaffold assembly protein, as well as other S acceptor proteins. The sequence is that of Cysteine desulfurase IscS from Vesicomyosocius okutanii subsp. Calyptogena okutanii (strain HA).